The following is a 410-amino-acid chain: WD repeat-containing protein jip5 (410 aa).

WD repeat units lie at residues 9–48 (PLSADLFAQAIHPSEPIISVGLSTGHVQTFRLPTEEEEEH), 74–113 (RHKGSCRTLTFGIDGEMLYSAGTDGLVKAAKAETGVVENK), 119–160 (AKDG…SKVA), 223–264 (VSST…DQDE), 273–316 (GGGE…VVSE), and 320–357 (DETEGVIGLGFDVEGHMVSGGGQIVKVWHEAADSIGGE). Positions 41–65 (PTEEEEEHSDDEQASVSSSRNGKGH) are disordered. The span at 43 to 53 (EEEEEHSDDEQ) shows a compositional bias: acidic residues. A disordered region spans residues 354–410 (IGGEKRGFGGDSDDSDDDSDDSDHEPKQGDDSRRKRKKQKGKDRGKGPEIMAFADLD). A compositionally biased stretch (acidic residues) spans 364–376 (DSDDSDDDSDDSD). Over residues 377–386 (HEPKQGDDSR) the composition is skewed to basic and acidic residues.

The protein belongs to the WD repeat WDR55 family.

It is found in the nucleus. The protein localises to the nucleolus. The chain is WD repeat-containing protein jip5 (jip5) from Emericella nidulans (strain FGSC A4 / ATCC 38163 / CBS 112.46 / NRRL 194 / M139) (Aspergillus nidulans).